The chain runs to 233 residues: Probable tetraheme cytochrome c-type (233 aa).

The first 28 residues, 1 to 28, serve as a signal peptide directing secretion; that stretch reads MTRLQKGSIGTLLTGALLGIVLVAVVFG. 14 residues coordinate heme: Cys-39, Cys-42, Met-45, Cys-67, Cys-70, His-71, Glu-93, Cys-131, Cys-134, His-135, Cys-159, Cys-162, His-163, and His-168. The disordered stretch occupies residues 182 to 233; that stretch reads QGKLVLKPEDDGDDEEADEDEDEETEEADDSSDSESASSSDNSDNEDDNNDE. Acidic residues-rich tracts occupy residues 191 to 214 and 224 to 233; these read DDGD…DSSD and SDNEDDNNDE.

The protein belongs to the NapC/NirT/NrfH family. Post-translationally, binds 4 heme groups per subunit.

The protein localises to the periplasm. In Nitrosomonas europaea (strain ATCC 19718 / CIP 103999 / KCTC 2705 / NBRC 14298), this protein is Probable tetraheme cytochrome c-type (cycX1).